The chain runs to 341 residues: S-adenosylmethionine:tRNA ribosyltransferase-isomerase (341 aa).

The protein belongs to the QueA family. Monomer.

It is found in the cytoplasm. The catalysed reaction is 7-aminomethyl-7-carbaguanosine(34) in tRNA + S-adenosyl-L-methionine = epoxyqueuosine(34) in tRNA + adenine + L-methionine + 2 H(+). Its pathway is tRNA modification; tRNA-queuosine biosynthesis. Transfers and isomerizes the ribose moiety from AdoMet to the 7-aminomethyl group of 7-deazaguanine (preQ1-tRNA) to give epoxyqueuosine (oQ-tRNA). This is S-adenosylmethionine:tRNA ribosyltransferase-isomerase from Clostridium botulinum (strain Alaska E43 / Type E3).